The following is a 56-amino-acid chain: Large ribosomal subunit protein bL32 (56 aa).

Residues 1–16 (MAVQKNRKTRSKRGMR) show a composition bias toward basic residues. Positions 1-28 (MAVQKNRKTRSKRGMRRSHDALTTAALS) are disordered.

Belongs to the bacterial ribosomal protein bL32 family.

This is Large ribosomal subunit protein bL32 from Vibrio campbellii (strain ATCC BAA-1116).